The sequence spans 352 residues: F-box/kelch-repeat protein At1g57790 (352 aa).

An F-box domain is found at 10–56; it reads KNLWKDLPLELLSSVMTFLEIKDNVRASVVCKSWFEAAVSVRVIDKS. 2 Kelch repeats span residues 148 to 189 and 190 to 234; these read VVFT…HNNV and VFSN…WNEG.

The chain is F-box/kelch-repeat protein At1g57790 from Arabidopsis thaliana (Mouse-ear cress).